The chain runs to 654 residues: Tetratricopeptide repeat protein 30 homolog (654 aa).

TPR repeat units follow at residues 10–43 (DGEY…STTR), 44–76 (AGLS…VPDV), 145–178 (ASTK…GGFN), 180–212 (HVAY…GIRN), 393–426 (CRSA…RAWI), 452–485 (SWRL…NYDD), and 535–568 (CIVN…GSGA).

This sequence belongs to the TTC30/dfy-1/fleer family.

It is found in the cell projection. Its subcellular location is the cilium. In terms of biological role, required for polyglutamylation of axonemal tubulin in sensory cilia. Plays a role in anterograde intraflagellar transport (IFT), the process by which cilia precursors are transported from the base of the cilium to the site of their incorporation at the tip. The protein is Tetratricopeptide repeat protein 30 homolog of Anopheles gambiae (African malaria mosquito).